Reading from the N-terminus, the 446-residue chain is COBRA-like protein 1 (446 aa).

Positions 1–28 (MALLLLRMGVSVALLVAFFSSLIPSSEA) are cleaved as a signal peptide. 9 N-linked (GlcNAc...) asparagine glycosylation sites follow: Asn37, Asn162, Asn170, Asn209, Asn234, Asn316, Asn331, Asn350, and Asn419. The GPI-anchor amidated alanine moiety is linked to residue Ala420. The propeptide at 421–446 (STRVMSSILLPFITIWTALTFLMVYA) is removed in mature form.

Belongs to the COBRA family.

The protein resides in the cell membrane. Functionally, involved in determining the orientation of cell expansion, probably by playing an important role in cellulose deposition. May act by recruiting cellulose synthesizing complexes to discrete positions on the cell surface. The polypeptide is COBRA-like protein 1 (BC1L6) (Oryza sativa subsp. japonica (Rice)).